Consider the following 209-residue polypeptide: Imidazoleglycerol-phosphate dehydratase (209 aa).

The segment at 1–23 (MQLSDRPLTAPGTAPRQATVSRR) is disordered.

The protein belongs to the imidazoleglycerol-phosphate dehydratase family.

The protein localises to the cytoplasm. The enzyme catalyses D-erythro-1-(imidazol-4-yl)glycerol 3-phosphate = 3-(imidazol-4-yl)-2-oxopropyl phosphate + H2O. It participates in amino-acid biosynthesis; L-histidine biosynthesis; L-histidine from 5-phospho-alpha-D-ribose 1-diphosphate: step 6/9. The sequence is that of Imidazoleglycerol-phosphate dehydratase from Synechococcus elongatus (strain ATCC 33912 / PCC 7942 / FACHB-805) (Anacystis nidulans R2).